A 135-amino-acid chain; its full sequence is Large ribosomal subunit protein eL32 (135 aa).

The protein belongs to the eukaryotic ribosomal protein eL32 family.

In Methanococcus maripaludis (strain C7 / ATCC BAA-1331), this protein is Large ribosomal subunit protein eL32.